Here is a 393-residue protein sequence, read N- to C-terminus: Riboflavin biosynthesis protein RibBA (393 aa).

The DHBP synthase stretch occupies residues 1 to 200; that stretch reads MQFDNIDSAL…IDDLIEYRKK (200 aa). Residues 27 to 28, Asp-32, 139 to 143, and Glu-163 each bind D-ribulose 5-phosphate; these read RE and RNGHT. Glu-28 lines the Mg(2+) pocket. His-142 serves as a coordination point for Mg(2+). Residues 201–393 form a GTP cyclohydrolase II region; sequence LEPEIEFKAK…TKKIKMGHLI (193 aa). Position 249–253 (249–253) interacts with GTP; it reads RLHSA. Positions 254, 265, and 267 each coordinate Zn(2+). GTP is bound by residues Gln-270, 291 to 293, and Thr-313; that span reads EGR. The active-site Proton acceptor; for GTP cyclohydrolase activity is Asp-325. Arg-327 (nucleophile; for GTP cyclohydrolase activity) is an active-site residue. GTP is bound by residues Ser-348 and Lys-353.

This sequence in the N-terminal section; belongs to the DHBP synthase family. In the C-terminal section; belongs to the GTP cyclohydrolase II family. Mg(2+) serves as cofactor. Mn(2+) is required as a cofactor. It depends on Zn(2+) as a cofactor.

It carries out the reaction D-ribulose 5-phosphate = (2S)-2-hydroxy-3-oxobutyl phosphate + formate + H(+). The catalysed reaction is GTP + 4 H2O = 2,5-diamino-6-hydroxy-4-(5-phosphoribosylamino)-pyrimidine + formate + 2 phosphate + 3 H(+). Its pathway is cofactor biosynthesis; riboflavin biosynthesis; 2-hydroxy-3-oxobutyl phosphate from D-ribulose 5-phosphate: step 1/1. The protein operates within cofactor biosynthesis; riboflavin biosynthesis; 5-amino-6-(D-ribitylamino)uracil from GTP: step 1/4. Functionally, catalyzes the conversion of D-ribulose 5-phosphate to formate and 3,4-dihydroxy-2-butanone 4-phosphate. Its function is as follows. Catalyzes the conversion of GTP to 2,5-diamino-6-ribosylamino-4(3H)-pyrimidinone 5'-phosphate (DARP), formate and pyrophosphate. The chain is Riboflavin biosynthesis protein RibBA from Staphylococcus aureus (strain COL).